Reading from the N-terminus, the 295-residue chain is Elongation factor Ts (295 aa).

Residues 79–82 are involved in Mg(2+) ion dislocation from EF-Tu; the sequence is TDFV.

This sequence belongs to the EF-Ts family.

It localises to the cytoplasm. Its function is as follows. Associates with the EF-Tu.GDP complex and induces the exchange of GDP to GTP. It remains bound to the aminoacyl-tRNA.EF-Tu.GTP complex up to the GTP hydrolysis stage on the ribosome. This is Elongation factor Ts from Mycoplasma capricolum subsp. capricolum (strain California kid / ATCC 27343 / NCTC 10154).